Here is a 130-residue protein sequence, read N- to C-terminus: Cuticle protein 14 isoform a (130 aa).

Residues I24–D90 enclose the Chitin-binding type R&amp;R domain.

The chain is Cuticle protein 14 isoform a from Limulus polyphemus (Atlantic horseshoe crab).